Reading from the N-terminus, the 1216-residue chain is Probable cation-transporting ATPase 13A5 (1216 aa).

A run of 5 helical transmembrane segments spans residues 33–53 (RALC…MFYW), 198–218 (LLVK…LTLW), 222–242 (GYIE…VLSV), 401–421 (FMVF…GVYM), and 433–453 (MALI…LTIG). The active-site 4-aspartylphosphate intermediate is Asp486. 2 N-linked (GlcNAc...) asparagine glycosylation sites follow: Asn650 and Asn817. Mg(2+) is bound by residues Asp848 and Asp852. 6 consecutive transmembrane segments (helical) span residues 896 to 916 (ALVS…IQFI), 933 to 950 (YLLQ…TMSI), 971 to 991 (LLLS…CTFL), 1040 to 1060 (FEGT…AFIF), 1075 to 1095 (LFSL…FCDF), and 1113 to 1133 (VSIL…EDAV).

The protein belongs to the cation transport ATPase (P-type) (TC 3.A.3) family. Type V subfamily. In terms of tissue distribution, specifically expressed in brain and stomach.

Its subcellular location is the membrane. The catalysed reaction is ATP + H2O = ADP + phosphate + H(+). The polypeptide is Probable cation-transporting ATPase 13A5 (Atp13a5) (Mus musculus (Mouse)).